A 509-amino-acid polypeptide reads, in one-letter code: MTMPIIMIIGVVFFLLIALIAVFITKYRTAGPDEALIVTGSYLGNKNVHVDEGGNRIKIVRGGGTFVLPVFQQAEPLSLLSSKLDVSTPEVYTEQGVPVMADGTAIIKIGGSIGEIATAAEQFLGKSKDDREQEAREVLEGHLRSILGSMTVEEIYKNREKFSQEVQRVASQDLAKMGLVIVSFTIKDVRDKNGYLESLGKPRIAQVKRDADIATAEADKETRIKRAEADKDAKKSELERATEIAEAEKINQLKMAEFRREQDTAKANADQAYDLETARARQQVTEQEMQVKIIERQKQIELEEKEILRRERQYDSEVKKKADADRYSVEQSAAAEKAKQLAEADAKKYSIEAMAKAEAEKVRIDGLAKAEAEKAKGETEAEVIRLKGLAEAEAKEKIAAAFEQYGQAAIFDMIVKMLPEYAKQAAAPLSNIDKITVVDTGGSGESSGANKVTSYATNLMSSLQESLKASSGIDVKEMLENFSGKGNVKQSINELTNEIKEAKTIQKSE.

The Cytoplasmic portion of the chain corresponds to 1-3 (MTM). The stretch at 4-24 (PIIMIIGVVFFLLIALIAVFI) is an intramembrane region. Residues 25–509 (TKYRTAGPDE…KEAKTIQKSE (485 aa)) are Cytoplasmic-facing. The tract at residues 119–301 (AAEQFLGKSK…KIIERQKQIE (183 aa)) is PHB domain. Residues 203–509 (RIAQVKRDAD…KEAKTIQKSE (307 aa)) form a required for correct localization region. Short sequence motifs (EA repeat) lie at residues 342 to 344 (AEA), 357 to 360 (AEAE), 370 to 373 (AEAE), and 390 to 394 (AEAEA). Positions 485–509 (KGNVKQSINELTNEIKEAKTIQKSE) are not required for correct localization.

It belongs to the band 7/mec-2 family. Flotillin subfamily. In terms of assembly, homooligomerizes. Oligomerizes in very large complexes in vitro. Interacts with FloA, FtsH, FtsX, OppA, SdhA and SecY in detergent-resistant membrane (DRM) fractions. Interacts with FtsH at midcell. Interacts with FloA. Interacts in vivo with KinC, FloA, FtsH and ResE. Interacts with ResE, colocalizes with ResE in FloT-only membrane rafts. Another study shows nearly complete colocalization with NfeD2, but only minor colocalization with FtsH or KinC.

It is found in the cell membrane. Its subcellular location is the membrane raft. In terms of biological role, found in functional membrane microdomains (FMM) that may be equivalent to eukaryotic membrane rafts. FMMs are highly dynamic and increase in number as cells age. FloA and FloT function is partially redundant; double deletions have marked synthetic phenotypes. Flotillins are thought to be important factors in membrane fluidity, especially during periods of rapid growth in rich media. Whether specific proteins are associated with FMMs is controversial; in one study FloT rafts have been shown to include proteins involved in adaptation to stationary phase, while FloA-FloT rafts include proteins involved in differentiation including sporulation, biofilm formation and DNA uptake competence. Another (more finely resolved) study only showed association of NfeD2 with FloT rafts of all the proteins examined. Aids homooligomerization of KinC and KinD but not KinB, may prevent incorrect hetero-association of the above kinases. Simultaneous overexpression of both FloA and FloT leads to defects in cell division and differentiation, in part caused by stabilization of FtsH and its subsequent increased ability to degrade proteins. Cells make more biofilm, are about half as long, have less EzrA and more frequent Z-rings. Involved in spatial organization of membranes, perhaps recruiting proteins (e.g. NfeD2) to specific membrane regions. Plays a role in phosphorylation of master regulator Spo0A, an early sporulation event. Plays a non-redundant role with dynamin-like protein A (dynA) in membrane dynamics and cell shape. The chain is Flotillin-like protein FloT from Bacillus subtilis (strain 168).